A 408-amino-acid chain; its full sequence is LL-diaminopimelate aminotransferase (408 aa).

Substrate is bound by residues Tyr-15 and Gly-42. Pyridoxal 5'-phosphate-binding positions include Tyr-72, 108–109 (SK), Tyr-132, Asn-187, Tyr-218, and 246–248 (SFS). The substrate site is built by Lys-109, Tyr-132, and Asn-187. Residue Lys-249 is modified to N6-(pyridoxal phosphate)lysine. Pyridoxal 5'-phosphate contacts are provided by Arg-257 and Asn-292. Positions 292 and 388 each coordinate substrate.

This sequence belongs to the class-I pyridoxal-phosphate-dependent aminotransferase family. LL-diaminopimelate aminotransferase subfamily. In terms of assembly, homodimer. Requires pyridoxal 5'-phosphate as cofactor.

The enzyme catalyses (2S,6S)-2,6-diaminopimelate + 2-oxoglutarate = (S)-2,3,4,5-tetrahydrodipicolinate + L-glutamate + H2O + H(+). The protein operates within amino-acid biosynthesis; L-lysine biosynthesis via DAP pathway; LL-2,6-diaminopimelate from (S)-tetrahydrodipicolinate (aminotransferase route): step 1/1. Involved in the synthesis of meso-diaminopimelate (m-DAP or DL-DAP), required for both lysine and peptidoglycan biosynthesis. Catalyzes the direct conversion of tetrahydrodipicolinate to LL-diaminopimelate. The chain is LL-diaminopimelate aminotransferase from Leptospira borgpetersenii serovar Hardjo-bovis (strain L550).